Reading from the N-terminus, the 474-residue chain is Glycogen synthase (474 aa).

Position 15 (lysine 15) interacts with ADP-alpha-D-glucose.

Belongs to the glycosyltransferase 1 family. Bacterial/plant glycogen synthase subfamily.

It catalyses the reaction [(1-&gt;4)-alpha-D-glucosyl](n) + ADP-alpha-D-glucose = [(1-&gt;4)-alpha-D-glucosyl](n+1) + ADP + H(+). It participates in glycan biosynthesis; glycogen biosynthesis. In terms of biological role, synthesizes alpha-1,4-glucan chains using ADP-glucose. The protein is Glycogen synthase of Chlamydia trachomatis serovar A (strain ATCC VR-571B / DSM 19440 / HAR-13).